A 1036-amino-acid chain; its full sequence is Presequence protease, mitochondrial (1036 aa).

The N-terminal 15 residues, 1–15 (MWRFSGRRGLCAVQR), are a transit peptide targeting the mitochondrion. Residue H104 participates in Zn(2+) binding. E107 functions as the Proton acceptor in the catalytic mechanism. Zn(2+) contacts are provided by H108 and E205. C119 and C556 form a disulfide bridge. N6-acetyllysine is present on K759. The residue at position 770 (K770) is an N6-acetyllysine; alternate. K770 carries the N6-succinyllysine; alternate modification. The disordered stretch occupies residues 806-833 (SKKERKPVRPHIVEKPTPSGPSGAAHVS). K848 is subject to N6-succinyllysine. K883 carries the post-translational modification N6-acetyllysine. Position 945 is an N6-succinyllysine (K945).

It belongs to the peptidase M16 family. PreP subfamily. As to quaternary structure, monomer and homodimer; homodimerization is induced by binding of the substrate. It depends on Zn(2+) as a cofactor. Post-translationally, a disulfide bond locks the enzyme in the closed conformation preventing substrate entry into the catalytic chamber.

It is found in the mitochondrion matrix. Mainly exists in a closed and catalytically competent conformation but a closed-to-open switch allows substrate entry into the catalytic chamber. Substrate binding induces closure and dimerization. A disulfide bond may lock the enzyme in a closed conformation preventing substrate entry into the catalytic chamber, participating in redox regulation of the enzyme. Inhibited by metal-chelating agents. Inhibited by nickel and zinc excess, and slightly activated by manganese. Metalloendopeptidase of the mitochondrial matrix that functions in peptide cleavage and degradation rather than in protein processing. Has an ATP-independent activity. Specifically cleaves peptides in the range of 5 to 65 residues. Shows a preference for cleavage after small polar residues and before basic residues, but without any positional preference. Degrades the transit peptides of mitochondrial proteins after their cleavage. Also degrades other unstructured peptides. It is also able to degrade amyloid-beta protein 40, one of the peptides produced by APP processing, when it accumulates in mitochondrion. It is a highly efficient protease, at least toward amyloid-beta protein 40. Cleaves that peptide at a specific position and is probably not processive, releasing digested peptides intermediates that can be further cleaved subsequently. It is also able to degrade amyloid-beta protein 42. The sequence is that of Presequence protease, mitochondrial from Mus musculus (Mouse).